The sequence spans 259 residues: Deoxyribose-phosphate aldolase (259 aa).

Asp102 functions as the Proton donor/acceptor in the catalytic mechanism. Lys167 acts as the Schiff-base intermediate with acetaldehyde in catalysis. Lys201 functions as the Proton donor/acceptor in the catalytic mechanism.

The protein belongs to the DeoC/FbaB aldolase family. DeoC type 2 subfamily.

It localises to the cytoplasm. It catalyses the reaction 2-deoxy-D-ribose 5-phosphate = D-glyceraldehyde 3-phosphate + acetaldehyde. Its pathway is carbohydrate degradation; 2-deoxy-D-ribose 1-phosphate degradation; D-glyceraldehyde 3-phosphate and acetaldehyde from 2-deoxy-alpha-D-ribose 1-phosphate: step 2/2. Catalyzes a reversible aldol reaction between acetaldehyde and D-glyceraldehyde 3-phosphate to generate 2-deoxy-D-ribose 5-phosphate. In Escherichia fergusonii (strain ATCC 35469 / DSM 13698 / CCUG 18766 / IAM 14443 / JCM 21226 / LMG 7866 / NBRC 102419 / NCTC 12128 / CDC 0568-73), this protein is Deoxyribose-phosphate aldolase.